A 260-amino-acid polypeptide reads, in one-letter code: Type III pantothenate kinase (260 aa).

Position 6–13 (aspartate 6–lysine 13) interacts with ATP. Substrate-binding positions include tyrosine 88 and glycine 95 to arginine 98. Aspartate 97 serves as the catalytic Proton acceptor. An ATP-binding site is contributed by serine 121. Position 184 (threonine 184) interacts with substrate.

The protein belongs to the type III pantothenate kinase family. Homodimer. The cofactor is NH4(+). It depends on K(+) as a cofactor.

Its subcellular location is the cytoplasm. It catalyses the reaction (R)-pantothenate + ATP = (R)-4'-phosphopantothenate + ADP + H(+). The protein operates within cofactor biosynthesis; coenzyme A biosynthesis; CoA from (R)-pantothenate: step 1/5. Functionally, catalyzes the phosphorylation of pantothenate (Pan), the first step in CoA biosynthesis. The sequence is that of Type III pantothenate kinase from Saccharophagus degradans (strain 2-40 / ATCC 43961 / DSM 17024).